A 644-amino-acid polypeptide reads, in one-letter code: 3D-(3,5/4)-trihydroxycyclohexane-1,2-dione hydrolase 2 (644 aa).

Position 65 (glutamate 65) interacts with thiamine diphosphate. Residues 442–522 are thiamine pyrophosphate binding; that stretch reads SLPGDLQRMW…INVLLFDNSG (81 aa). The Mg(2+) site is built by aspartate 493 and asparagine 520.

Belongs to the TPP enzyme family. The cofactor is Mg(2+). Thiamine diphosphate serves as cofactor.

It catalyses the reaction 3D-3,5/4-trihydroxycyclohexane-1,2-dione + H2O = 5-deoxy-D-glucuronate + H(+). The protein operates within polyol metabolism; myo-inositol degradation into acetyl-CoA; acetyl-CoA from myo-inositol: step 3/7. Involved in the cleavage of the C1-C2 bond of 3D-(3,5/4)-trihydroxycyclohexane-1,2-dione (THcHDO) to yield 5-deoxy-glucuronate (5DG). The sequence is that of 3D-(3,5/4)-trihydroxycyclohexane-1,2-dione hydrolase 2 from Bacillus cereus (strain ZK / E33L).